The sequence spans 496 residues: Glycerol kinase (496 aa).

T12 lines the ADP pocket. ATP is bound by residues T12, T13, and S14. T12 contributes to the sn-glycerol 3-phosphate binding site. R16 is a binding site for ADP. Residues R82, E83, and Y134 each contribute to the sn-glycerol 3-phosphate site. Residues R82, E83, and Y134 each contribute to the glycerol site. H230 bears the Phosphohistidine; by HPr mark. D244 is a binding site for sn-glycerol 3-phosphate. 2 residues coordinate glycerol: D244 and Q245. 2 residues coordinate ADP: T266 and G309. Residues T266, G309, Q313, and G410 each contribute to the ATP site. ADP contacts are provided by G410 and N414.

This sequence belongs to the FGGY kinase family. Homotetramer and homodimer (in equilibrium). The phosphoenolpyruvate-dependent sugar phosphotransferase system (PTS), including enzyme I, and histidine-containing protein (HPr) are required for the phosphorylation, which leads to the activation of the enzyme.

The enzyme catalyses glycerol + ATP = sn-glycerol 3-phosphate + ADP + H(+). Its pathway is polyol metabolism; glycerol degradation via glycerol kinase pathway; sn-glycerol 3-phosphate from glycerol: step 1/1. With respect to regulation, activated by phosphorylation and inhibited by fructose 1,6-bisphosphate (FBP). Key enzyme in the regulation of glycerol uptake and metabolism. Catalyzes the phosphorylation of glycerol to yield sn-glycerol 3-phosphate. This Bacillus licheniformis (strain ATCC 14580 / DSM 13 / JCM 2505 / CCUG 7422 / NBRC 12200 / NCIMB 9375 / NCTC 10341 / NRRL NRS-1264 / Gibson 46) protein is Glycerol kinase.